A 208-amino-acid chain; its full sequence is Uracil phosphoribosyltransferase (208 aa).

Residues Arg-78, Arg-103, and 130–138 (DPMLATGGS) each bind 5-phospho-alpha-D-ribose 1-diphosphate. Uracil is bound by residues Ile-193 and 198 to 200 (GDA). Position 199 (Asp-199) interacts with 5-phospho-alpha-D-ribose 1-diphosphate.

The protein belongs to the UPRTase family. Mg(2+) is required as a cofactor.

It catalyses the reaction UMP + diphosphate = 5-phospho-alpha-D-ribose 1-diphosphate + uracil. Its pathway is pyrimidine metabolism; UMP biosynthesis via salvage pathway; UMP from uracil: step 1/1. Its activity is regulated as follows. Allosterically activated by GTP. Functionally, catalyzes the conversion of uracil and 5-phospho-alpha-D-ribose 1-diphosphate (PRPP) to UMP and diphosphate. The protein is Uracil phosphoribosyltransferase of Trichlorobacter lovleyi (strain ATCC BAA-1151 / DSM 17278 / SZ) (Geobacter lovleyi).